A 156-amino-acid chain; its full sequence is MLHVKTIEGQFDAKGLKFAIIATRFNDFIVDRLVGGAVDYLARHGCEREDMTIVRIPGAFEMPIVAQKLAKSGRYHGIIALGAVIRGATPHFDFVAGEATKGLAHISLDSGVPVGFGLLTTDSIEQAIERAGTKAGNKGVEAAAAVLETVRVMEQL.

Residues phenylalanine 25, 59–61 (AFE), and 83–85 (AVI) contribute to the 5-amino-6-(D-ribitylamino)uracil site. 88 to 89 (AT) is a (2S)-2-hydroxy-3-oxobutyl phosphate binding site. Histidine 91 (proton donor) is an active-site residue. Phenylalanine 116 contributes to the 5-amino-6-(D-ribitylamino)uracil binding site. Arginine 130 lines the (2S)-2-hydroxy-3-oxobutyl phosphate pocket.

This sequence belongs to the DMRL synthase family.

The enzyme catalyses (2S)-2-hydroxy-3-oxobutyl phosphate + 5-amino-6-(D-ribitylamino)uracil = 6,7-dimethyl-8-(1-D-ribityl)lumazine + phosphate + 2 H2O + H(+). It participates in cofactor biosynthesis; riboflavin biosynthesis; riboflavin from 2-hydroxy-3-oxobutyl phosphate and 5-amino-6-(D-ribitylamino)uracil: step 1/2. Its function is as follows. Catalyzes the formation of 6,7-dimethyl-8-ribityllumazine by condensation of 5-amino-6-(D-ribitylamino)uracil with 3,4-dihydroxy-2-butanone 4-phosphate. This is the penultimate step in the biosynthesis of riboflavin. The polypeptide is 6,7-dimethyl-8-ribityllumazine synthase (Nitratidesulfovibrio vulgaris (strain DSM 19637 / Miyazaki F) (Desulfovibrio vulgaris)).